We begin with the raw amino-acid sequence, 191 residues long: Ribosomal RNA small subunit methyltransferase G (191 aa).

S-adenosyl-L-methionine is bound by residues Gly-59, 111 to 112, and Arg-124; that span reads IE.

Belongs to the methyltransferase superfamily. RNA methyltransferase RsmG family.

It is found in the cytoplasm. Functionally, specifically methylates the N7 position of a guanine in 16S rRNA. The sequence is that of Ribosomal RNA small subunit methyltransferase G from Mycoplasma pneumoniae (strain ATCC 29342 / M129 / Subtype 1) (Mycoplasmoides pneumoniae).